Here is a 128-residue protein sequence, read N- to C-terminus: Ribonuclease pancreatic (128 aa).

The segment at 1-20 (KETAAMKFQRQHMDSGSSLS) is disordered. Residues Lys-7 and Arg-10 each coordinate substrate. His-12 functions as the Proton acceptor in the catalytic mechanism. Disulfide bonds link Cys-26/Cys-84, Cys-40/Cys-95, Cys-58/Cys-110, and Cys-65/Cys-72. A glycan (N-linked (GlcNAc...) asparagine) is linked at Asn-34. Substrate-binding positions include 41-45 (KPVNT), Lys-66, and Arg-85. His-119 functions as the Proton donor in the catalytic mechanism.

The protein belongs to the pancreatic ribonuclease family. As to quaternary structure, monomer. Interacts with and forms tight 1:1 complexes with RNH1. Dimerization of two such complexes may occur. Interaction with RNH1 inhibits this protein. In terms of tissue distribution, pancreas.

The protein resides in the secreted. The catalysed reaction is an [RNA] containing cytidine + H2O = an [RNA]-3'-cytidine-3'-phosphate + a 5'-hydroxy-ribonucleotide-3'-[RNA].. It catalyses the reaction an [RNA] containing uridine + H2O = an [RNA]-3'-uridine-3'-phosphate + a 5'-hydroxy-ribonucleotide-3'-[RNA].. Its function is as follows. Endonuclease that catalyzes the cleavage of RNA on the 3' side of pyrimidine nucleotides. Acts on single-stranded and double-stranded RNA. The protein is Ribonuclease pancreatic (RNASE1) of Choloepus hoffmanni (Hoffmann's two-fingered sloth).